The primary structure comprises 206 residues: Large ribosomal subunit protein uL3 (206 aa).

The tract at residues 116-149 is disordered; it reads GFQGAIKRHNQSRGPMSHGSRYHRRPGSMGPVAP.

The protein belongs to the universal ribosomal protein uL3 family. As to quaternary structure, part of the 50S ribosomal subunit. Forms a cluster with proteins L14 and L19.

One of the primary rRNA binding proteins, it binds directly near the 3'-end of the 23S rRNA, where it nucleates assembly of the 50S subunit. The sequence is that of Large ribosomal subunit protein uL3 from Shouchella clausii (strain KSM-K16) (Alkalihalobacillus clausii).